The chain runs to 268 residues: Putative type I specificity subunit S.MpnORF365P (268 aa).

Belongs to the type-I restriction system S methylase family. As to quaternary structure, the methyltransferase is composed of M and S polypeptides.

The specificity (S) subunit of a type I methyltransferase (MTase); this subunit dictates DNA sequence specificity. The single R subunit has multiple frameshifts and is probably not expressed. The chain is Putative type I specificity subunit S.MpnORF365P from Mycoplasma pneumoniae (strain ATCC 29342 / M129 / Subtype 1) (Mycoplasmoides pneumoniae).